A 185-amino-acid chain; its full sequence is Prorelaxin 1 (185 aa).

Positions 1–22 (MSSRFLLQLLGFWLLLSQPCRT) are cleaved as a signal peptide. 3 cysteine pairs are disulfide-bonded: cysteine 36/cysteine 171, cysteine 48/cysteine 185, and cysteine 170/cysteine 175. A propeptide spans 58–156 (SQEEPALLAR…LKYLQSDTHS (99 aa)) (connecting peptide). Residues 135–161 (RLGEAEDGSPPGLKYLQSDTHSRKKRE) form a disordered region.

The protein belongs to the insulin family. Heterodimer of a B chain and an A chain linked by two disulfide bonds.

The protein localises to the secreted. Its function is as follows. Relaxin is an ovarian hormone that acts with estrogen to produce dilatation of the birth canal in many mammals. In Mus musculus (Mouse), this protein is Prorelaxin 1 (Rln1).